Reading from the N-terminus, the 373-residue chain is 4-hydroxy-3-methylbut-2-en-1-yl diphosphate synthase (flavodoxin) (373 aa).

Positions 270, 273, 305, and 312 each coordinate [4Fe-4S] cluster.

Belongs to the IspG family. [4Fe-4S] cluster is required as a cofactor.

The enzyme catalyses (2E)-4-hydroxy-3-methylbut-2-enyl diphosphate + oxidized [flavodoxin] + H2O + 2 H(+) = 2-C-methyl-D-erythritol 2,4-cyclic diphosphate + reduced [flavodoxin]. The protein operates within isoprenoid biosynthesis; isopentenyl diphosphate biosynthesis via DXP pathway; isopentenyl diphosphate from 1-deoxy-D-xylulose 5-phosphate: step 5/6. Functionally, converts 2C-methyl-D-erythritol 2,4-cyclodiphosphate (ME-2,4cPP) into 1-hydroxy-2-methyl-2-(E)-butenyl 4-diphosphate. This is 4-hydroxy-3-methylbut-2-en-1-yl diphosphate synthase (flavodoxin) from Pectobacterium carotovorum subsp. carotovorum (strain PC1).